The chain runs to 391 residues: Small ribosomal subunit protein bS1 (391 aa).

S1 motif domains lie at 16 to 90, 108 to 173, 194 to 262, and 279 to 348; these read GDKV…LSRR, NEII…LSRK, GDVI…LSIK, and NDDI…LSIK. Residues 356 to 381 form a disordered region; sequence VVESDPSTTKAYLESEEEDNPTIGDM.

It belongs to the bacterial ribosomal protein bS1 family.

In terms of biological role, binds mRNA; thus facilitating recognition of the initiation point. It is needed to translate mRNA with a short Shine-Dalgarno (SD) purine-rich sequence. This is Small ribosomal subunit protein bS1 (rpsA) from Staphylococcus aureus (strain MRSA252).